A 490-amino-acid polypeptide reads, in one-letter code: GTPase Der (490 aa).

EngA-type G domains follow at residues P3–E166 and I196–V369. Residues G9–S16, D56–I60, N118–D121, G202–S209, D249–V253, and N314–D317 each bind GTP. The 85-residue stretch at T370–E454 folds into the KH-like domain. Residues G452–R490 are disordered. Positions N470–R490 are enriched in basic residues.

The protein belongs to the TRAFAC class TrmE-Era-EngA-EngB-Septin-like GTPase superfamily. EngA (Der) GTPase family. As to quaternary structure, associates with the 50S ribosomal subunit.

In terms of biological role, GTPase that plays an essential role in the late steps of ribosome biogenesis. The polypeptide is GTPase Der (Pseudomonas savastanoi pv. phaseolicola (strain 1448A / Race 6) (Pseudomonas syringae pv. phaseolicola (strain 1448A / Race 6))).